A 119-amino-acid chain; its full sequence is cAMP-responsive element-binding protein-like 2 (119 aa).

The segment at 1–23 (MDDSKIVAGKVKKPGKRGRKPAK) is disordered. Residues 10–21 (KVKKPGKRGRKP) show a composition bias toward basic residues. In terms of domain architecture, bZIP spans 23 to 86 (KIDLKAKLER…LAMDQGKIPS (64 aa)). Positions 29–60 (KLERSRQSARECRARKKLRYQYLEELVSSKER) are basic motif. Residues 62 to 69 (ICALREEL) form a leucine-zipper region. Positions 95-119 (DEQKTPQSCSNKTTKNSKYSSSSGI) are disordered. Over residues 102-119 (SCSNKTTKNSKYSSSSGI) the composition is skewed to low complexity.

Belongs to the bZIP family. ATF subfamily.

The protein localises to the nucleus. Functionally, probable regulator of creb1 transcriptional activity which is involved in adipose cells differentiation. May also play a regulatory role in the cell cycle. This chain is cAMP-responsive element-binding protein-like 2 (crebl2), found in Danio rerio (Zebrafish).